A 499-amino-acid polypeptide reads, in one-letter code: Glucose-6-phosphate exchanger SLC37A2 (499 aa).

Residues 21–40 (YRGFIIVMTFLFYTCYHLSR) traverse the membrane as a helical segment. Asparagine 53, asparagine 62, and asparagine 66 each carry an N-linked (GlcNAc...) asparagine glycan. Transmembrane regions (helical) follow at residues 86 to 106 (GSLD…SGIF), 116 to 136 (LSGG…GYYW), 143 to 163 (YYIL…PAVV), 187 to 207 (AVGN…AWGL), 208 to 228 (SFIV…FFLV), 302 to 322 (LCLL…PLYI), 334 to 354 (GDLS…AGGI), 362 to 382 (AITC…YNYF), 391 to 411 (IAML…ITTA), 434 to 454 (AIID…AGVL), and 458 to 478 (GWNY…LLLA).

Belongs to the major facilitator superfamily. Organophosphate:Pi antiporter (OPA) (TC 2.A.1.4) family.

It localises to the endoplasmic reticulum membrane. The enzyme catalyses D-glucose 6-phosphate(in) + phosphate(out) = D-glucose 6-phosphate(out) + phosphate(in). Functionally, inorganic phosphate and glucose-6-phosphate antiporter. May transport cytoplasmic glucose-6-phosphate into the lumen of the endoplasmic reticulum and translocate inorganic phosphate into the opposite direction. The protein is Glucose-6-phosphate exchanger SLC37A2 of Xenopus laevis (African clawed frog).